The chain runs to 152 residues: UPF0225 protein YchJ (152 aa).

Belongs to the UPF0225 family.

This is UPF0225 protein YchJ from Escherichia coli O127:H6 (strain E2348/69 / EPEC).